Consider the following 655-residue polypeptide: RNA-binding protein EWS (655 aa).

The interval 1–285 is EAD (Gln/Pro/Thr-rich); sequence MASTDYSTYS…GVYGQESGGF (285 aa). Tandem repeats lie at residues 8–16, 17–27, 28–34, 35–42, 43–50, 51–59, 60–68, 69–75, 76–84, 85–91, 92–110, 111–116, 117–125, 126–156, 157–163, 164–170, 171–177, 178–188, 189–193, 194–201, 202–206, 207–212, 213–218, 219–224, 225–230, 231–238, 239–245, 246–252, 253–259, 260–276, and 277–285. Residues 8 to 285 form a 31 X approximate tandem repeats region; the sequence is TYSQAAAQQG…GVYGQESGGF (278 aa). A disordered region spans residues 121–350; the sequence is QPAYPTYGQQ…EGPDLDLGLP (230 aa). Polar residues-rich tracts occupy residues 127 to 137 and 146 to 172; these read YGQQPTATAPT and AETS…NYSY. Over residues 192–266 the composition is skewed to low complexity; sequence PTSYSSSQPT…QSSSYGQQSS (75 aa). The region spanning 256–285 is the IQ domain; that stretch reads QQSSSYGQQSSFRQDHPSSMGVYGQESGGF. Residue Ser-266 is modified to Phosphoserine; by PKC. Asymmetric dimethylarginine is present on residues Arg-300, Arg-302, Arg-304, Arg-309, Arg-314, Arg-317, and Arg-321. Gly residues predominate over residues 308–334; sequence DRGGMSRGGRGGGRGGLGAGERGGFNK. A compositionally biased stretch (low complexity) spans 335-350; it reads PGGPMDEGPDLDLGLP. One can recognise an RRM domain in the interval 360–446; it reads SAIYVQGLND…SKLKVSLARK (87 aa). Position 438 is an N6-acetyllysine (Lys-438). Disordered stretches follow at residues 447–524 and 544–655; these read KPPM…WQCP and APKP…DRPY. Asymmetric dimethylarginine is present on residues Arg-454 and Arg-463. Position 470 is an asymmetric dimethylarginine; alternate (Arg-470). Residue Arg-470 is modified to Omega-N-methylarginine; alternate. Positions 471–489 are enriched in gly residues; that stretch reads GGPGGPGGPGGPMGRMGGR. Arg-485 is subject to Omega-N-methylarginine. The residue at position 489 (Arg-489) is an Asymmetric dimethylarginine; by PRMT8. Residues Arg-493, Arg-499, and Arg-502 each carry the asymmetric dimethylarginine modification. The residue at position 505 (Arg-505) is an Asymmetric dimethylarginine; alternate. An Omega-N-methylarginine; alternate modification is found at Arg-505. The RanBP2-type zinc-finger motif lies at 517–548; sequence RAGDWQCPNPGCGNQNFAWRTECNQCKAPKPE. Positions 550–559 are enriched in pro residues; the sequence is FLPPPFPPPG. Asymmetric dimethylarginine occurs at positions 562 and 564. A compositionally biased stretch (gly residues) spans 565–590; it reads GGPGGMRGGRGGLMDRGGPGGMFRGG. At Arg-571 the chain carries Asymmetric dimethylarginine; alternate; by PRMT8. Position 571 is an omega-N-methylarginine; alternate; by PRMT8 (Arg-571). Asymmetric dimethylarginine occurs at positions 574, 580, 588, and 591. Basic and acidic residues predominate over residues 591–605; sequence RGGDRGGFRGGRGMD. Arg-595 carries the post-translational modification Asymmetric dimethylarginine; alternate; by PRMT8. Omega-N-methylarginine; alternate; by PRMT8 is present on Arg-595. The residue at position 599 (Arg-599) is an Asymmetric dimethylarginine. Arg-602 carries the post-translational modification Asymmetric dimethylarginine; by PRMT8. Arg-606 carries the post-translational modification Asymmetric dimethylarginine; alternate; by PRMT8. Omega-N-methylarginine; alternate; by PRMT8 is present on Arg-606. Residues 606–617 are compositionally biased toward gly residues; that stretch reads RGGFGGGRRGGP. Residue Arg-614 is modified to Asymmetric dimethylarginine; alternate. An Omega-N-methylarginine; alternate modification is found at Arg-614. Asymmetric dimethylarginine is present on residues Arg-632 and Arg-635. Residues 638–655 carry the Nuclear localization signal motif; the sequence is PGKMDKGEHRQERRDRPY. A compositionally biased stretch (basic and acidic residues) spans 640–655; that stretch reads KMDKGEHRQERRDRPY.

The protein belongs to the RRM TET family. In terms of assembly, binds RNA, POLR2C, SF1 and calmodulin. Interacts with PTK2B and TDRD3. Forms a complex with REC8, PRDM9, SYCP3 and SYCP1; complex formation is dependent of phosphorylated form of REC8 and requires PRDM9 bound to hotspot DNA; EWSR1 joins PRDM9 with the chromosomal axis through REC8. In terms of processing, phosphorylated; calmodulin-binding inhibits phosphorylation of Ser-266. Highly methylated on arginine residues. Methylation is mediated by PRMT1 and, at lower level by PRMT8.

The protein localises to the nucleus. It localises to the cytoplasm. Its subcellular location is the cell membrane. Binds to ssRNA containing the consensus sequence 5'-AGGUAA-3'. Might function as a transcriptional repressor. The polypeptide is RNA-binding protein EWS (Ewsr1) (Mus musculus (Mouse)).